We begin with the raw amino-acid sequence, 164 residues long: Probable Brix domain-containing ribosomal biogenesis protein (164 aa).

The Brix domain maps to Met1–Glu164.

Functionally, probably involved in the biogenesis of the ribosome. This is Probable Brix domain-containing ribosomal biogenesis protein from Methanococcus maripaludis (strain DSM 14266 / JCM 13030 / NBRC 101832 / S2 / LL).